A 325-amino-acid polypeptide reads, in one-letter code: Aldo-keto reductase family 1 member A1 (325 aa).

A2 bears the N-acetylalanine mark. A Phosphoserine modification is found at S4. Residues 11-20 (GQKMPLIGLG), T21, and W22 contribute to the NADP(+) site. Phosphoserine is present on S38. D45 lines the NADP(+) pocket. The active-site Proton donor is the Y50. An N6-acetyllysine; alternate modification is found at K127. K127 bears the N6-succinyllysine; alternate mark. K145 carries the N6-succinyllysine modification. Residues S162, N163, S211, L213, S215, S216, K263, S264, I265, T266, R269, Q272, and N273 each contribute to the NADP(+) site. S211 carries the post-translational modification Phosphoserine.

It belongs to the aldo/keto reductase family. As to quaternary structure, monomer. In terms of tissue distribution, widely expressed. Highly expressed in kidney, salivary gland and liver. Detected in trachea, stomach, brain, lung, prostate, placenta, mammary gland, small intestine and lung.

It localises to the cytoplasm. It is found in the cytosol. The protein resides in the apical cell membrane. It carries out the reaction a primary alcohol + NADP(+) = an aldehyde + NADPH + H(+). The enzyme catalyses allyl alcohol + NADP(+) = acrolein + NADPH + H(+). It catalyses the reaction glycerol + NADP(+) = D-glyceraldehyde + NADPH + H(+). The catalysed reaction is glycerol + NADP(+) = L-glyceraldehyde + NADPH + H(+). It carries out the reaction hydroxyacetone + NADP(+) = methylglyoxal + NADPH + H(+). The enzyme catalyses a 4-hydroxynonen-1-ol + NADP(+) = a 4-hydroxynonenal + NADPH + H(+). It catalyses the reaction 3-deoxyfructose + NADP(+) = 3-deoxyglucosone + NADPH + H(+). The catalysed reaction is L-gulonate + NADP(+) = aldehydo-D-glucuronate + NADPH + H(+). It carries out the reaction L-gulono-1,4-lactone + NADP(+) = D-glucurono-3,6-lactone + NADPH + H(+). The enzyme catalyses pyridine 3-methanol + NADP(+) = pyridine-3-carbaldehyde + NADPH + H(+). It catalyses the reaction S-nitroso-CoA + NADPH + H(+) = sulfinamide-CoA + NADP(+). The catalysed reaction is S-nitrosoglutathione + NADPH + H(+) = S-(hydroxysulfenamide)glutathione + NADP(+). In terms of biological role, catalyzes the NADPH-dependent reduction of a wide variety of carbonyl-containing compounds to their corresponding alcohols. Displays enzymatic activity towards endogenous metabolites such as aromatic and aliphatic aldehydes, ketones, monosaccharides and bile acids, with a preference for negatively charged substrates, such as glucuronate and succinic semialdehyde. Functions as a detoxifiying enzyme by reducing a range of toxic aldehydes. Reduces methylglyoxal and 3-deoxyglucosone, which are present at elevated levels under hyperglycemic conditions and are cytotoxic. Involved also in the detoxification of lipid-derived aldehydes like acrolein. Plays a role in the activation of procarcinogens, such as polycyclic aromatic hydrocarbon trans-dihydrodiols, and in the metabolism of various xenobiotics and drugs, including the anthracyclines doxorubicin (DOX) and daunorubicin (DAUN). Also acts as an inhibitor of protein S-nitrosylation by mediating degradation of S-nitroso-coenzyme A (S-nitroso-CoA), a cofactor required to S-nitrosylate proteins. S-nitroso-CoA reductase activity is involved in reprogramming intermediary metabolism in renal proximal tubules, notably by inhibiting protein S-nitrosylation of isoform 2 of PKM (PKM2). Also acts as a S-nitroso-glutathione reductase by catalyzing the NADPH-dependent reduction of S-nitrosoglutathione. Displays no reductase activity towards retinoids. The polypeptide is Aldo-keto reductase family 1 member A1 (AKR1A1) (Homo sapiens (Human)).